The primary structure comprises 192 residues: Vascular endothelial growth factor A (192 aa).

Residues 1-26 (MNFLLSWIHWGLAALLYFHNAKVLQA) form the signal peptide. Cystine bridges form between Cys-52-Cys-94, Cys-83-Cys-128, and Cys-87-Cys-130. Asn-101 carries N-linked (GlcNAc...) asparagine glycosylation.

Belongs to the PDGF/VEGF growth factor family. Homodimer; disulfide-linked. Also found as heterodimer with PGF Interacts with FLT1/VEGFR1 and KDR/VEGFR2 receptors, heparan sulfate and heparin. In terms of tissue distribution, expressed by the venom gland, and probably other tissues.

The protein resides in the secreted. Its function is as follows. Growth factor active in angiogenesis, vasculogenesis and endothelial cell growth. Induces endothelial cell proliferation, promotes cell migration, inhibits apoptosis and induces permeabilization of blood vessels. The sequence is that of Vascular endothelial growth factor A from Vipera ammodytes ammodytes (Western sand viper).